The sequence spans 422 residues: Dihydroorotase (422 aa).

Residues H59 and H61 each coordinate Zn(2+). Residues 61-63 and N93 contribute to the substrate site; that span reads HFR. Zn(2+) contacts are provided by D150, H177, and H230. N276 contributes to the substrate binding site. D303 contributes to the Zn(2+) binding site. D303 is a catalytic residue. H307 contacts substrate.

It belongs to the metallo-dependent hydrolases superfamily. DHOase family. Class I DHOase subfamily. Zn(2+) is required as a cofactor.

It catalyses the reaction (S)-dihydroorotate + H2O = N-carbamoyl-L-aspartate + H(+). The protein operates within pyrimidine metabolism; UMP biosynthesis via de novo pathway; (S)-dihydroorotate from bicarbonate: step 3/3. Functionally, catalyzes the reversible cyclization of carbamoyl aspartate to dihydroorotate. The polypeptide is Dihydroorotase (Streptococcus thermophilus (strain CNRZ 1066)).